The primary structure comprises 312 residues: Aspartate carbamoyltransferase catalytic subunit (312 aa).

2 residues coordinate carbamoyl phosphate: Arg-58 and Thr-59. Lys-86 is a binding site for L-aspartate. Arg-108, His-136, and Gln-139 together coordinate carbamoyl phosphate. Arg-169 and Arg-223 together coordinate L-aspartate. Positions 264 and 265 each coordinate carbamoyl phosphate.

Belongs to the aspartate/ornithine carbamoyltransferase superfamily. ATCase family. Heterododecamer (2C3:3R2) of six catalytic PyrB chains organized as two trimers (C3), and six regulatory PyrI chains organized as three dimers (R2).

The catalysed reaction is carbamoyl phosphate + L-aspartate = N-carbamoyl-L-aspartate + phosphate + H(+). It functions in the pathway pyrimidine metabolism; UMP biosynthesis via de novo pathway; (S)-dihydroorotate from bicarbonate: step 2/3. Catalyzes the condensation of carbamoyl phosphate and aspartate to form carbamoyl aspartate and inorganic phosphate, the committed step in the de novo pyrimidine nucleotide biosynthesis pathway. This chain is Aspartate carbamoyltransferase catalytic subunit, found in Endomicrobium trichonymphae.